The primary structure comprises 922 residues: uncharacterized protein (922 aa).

Disordered regions lie at residues 459–522 (SLQD…QPKN), 539–627 (SNSA…SSLG), 649–668 (GFSS…RQPF), 692–835 (QKLD…VTSL), and 856–879 (PWRK…RPER). Positions 546–567 (KAKHSSNKPHKAASSRISKTKS) are enriched in basic residues. Over residues 582 to 600 (KKSEESKQSGKKVKVEEKQ) the composition is skewed to basic and acidic residues. Positions 651–660 (SSSRTLGSSS) are enriched in low complexity. Over residues 692–702 (QKLDGSAEKEC) the composition is skewed to basic and acidic residues. Composition is skewed to polar residues over residues 755-779 (DSTN…SLTG) and 790-824 (KATQ…SSLQ). The stretch at 872 to 899 (TEEQRPEREAMKRKAQQERENAAKYTSL) forms a coiled coil.

This is an uncharacterized protein from Homo sapiens (Human).